The sequence spans 188 residues: MSSLEISSSCFSLETKLPLSPPLVEDSAFEPSRKDMDEVEEKSKDVINFTAEKLSVDEVSQLVISPLCGAISLFVGTTRNNFEGKKVISLEYEAYLPMAENEVRKICSDIRQKWPVKHIAVFHRLGLVPVSEASIIIAVSSAHRAASLEAVSYAIDTLKAKVPIWKKEIYEESSTWKGNKECFWASNS.

Residue serine 20 is modified to Phosphoserine. Residues 143–144 (HR), lysine 159, and 166–168 (KKE) contribute to the substrate site.

It belongs to the MoaE family. MOCS2B subfamily. In terms of assembly, heterotetramer; composed of 2 small (MOCS2A) and 2 large (MOCS2B) subunits. Highest levels are found in heart and skeletal muscle. Lower levels are present in brain, kidney and pancreas. Very low levels are found in lung and peripheral blood leukocytes.

It is found in the cytoplasm. The protein resides in the cytosol. It carries out the reaction 2 [molybdopterin-synthase sulfur-carrier protein]-C-terminal-Gly-aminoethanethioate + cyclic pyranopterin phosphate + H2O = molybdopterin + 2 [molybdopterin-synthase sulfur-carrier protein]-C-terminal Gly-Gly + 2 H(+). It functions in the pathway cofactor biosynthesis; molybdopterin biosynthesis. Functionally, catalytic subunit of the molybdopterin synthase complex, a complex that catalyzes the conversion of precursor Z into molybdopterin. Acts by mediating the incorporation of 2 sulfur atoms from thiocarboxylated MOCS2A into precursor Z to generate a dithiolene group. This chain is Molybdopterin synthase catalytic subunit, found in Homo sapiens (Human).